The chain runs to 177 residues: 3-hydroxyanthranilate 3,4-dioxygenase (177 aa).

Arg-47 contributes to the O2 binding site. Fe cation is bound by residues His-51, Glu-57, and His-95. Glu-57 is a binding site for substrate. Positions 99 and 110 each coordinate substrate. Fe cation-binding residues include Cys-125, Cys-128, Cys-162, and Cys-165.

The protein belongs to the 3-HAO family. As to quaternary structure, homodimer. Fe(2+) serves as cofactor.

The enzyme catalyses 3-hydroxyanthranilate + O2 = (2Z,4Z)-2-amino-3-carboxymuconate 6-semialdehyde. Its pathway is cofactor biosynthesis; NAD(+) biosynthesis; quinolinate from L-kynurenine: step 3/3. Functionally, catalyzes the oxidative ring opening of 3-hydroxyanthranilate to 2-amino-3-carboxymuconate semialdehyde, which spontaneously cyclizes to quinolinate. This Burkholderia cenocepacia (strain ATCC BAA-245 / DSM 16553 / LMG 16656 / NCTC 13227 / J2315 / CF5610) (Burkholderia cepacia (strain J2315)) protein is 3-hydroxyanthranilate 3,4-dioxygenase.